Here is a 42-residue protein sequence, read N- to C-terminus: Histone H1B (42 aa).

The H15 domain maps to 1 to 42 (TYYELIKAAILALKERNGSSAQAIKKYILENNKIEFQQTFLR).

Belongs to the histone H1/H5 family.

The protein localises to the nucleus. The protein resides in the chromosome. Functionally, histones H1 are necessary for the condensation of nucleosome chains into higher-order structures. This Olisthodiscus luteus (Marine phytoflagellate) protein is Histone H1B.